A 287-amino-acid chain; its full sequence is Homoserine kinase (287 aa).

Position 78–88 (78–88 (PLSRGLGSSST)) interacts with ATP.

This sequence belongs to the GHMP kinase family. Homoserine kinase subfamily.

It localises to the cytoplasm. It carries out the reaction L-homoserine + ATP = O-phospho-L-homoserine + ADP + H(+). It functions in the pathway amino-acid biosynthesis; L-threonine biosynthesis; L-threonine from L-aspartate: step 4/5. In terms of biological role, catalyzes the ATP-dependent phosphorylation of L-homoserine to L-homoserine phosphate. In Lactobacillus gasseri (strain ATCC 33323 / DSM 20243 / BCRC 14619 / CIP 102991 / JCM 1131 / KCTC 3163 / NCIMB 11718 / NCTC 13722 / AM63), this protein is Homoserine kinase.